Here is a 404-residue protein sequence, read N- to C-terminus: Argininosuccinate synthase (404 aa).

Residues 10–18 (AYSGGLDTS) and alanine 37 each bind ATP. Residues tyrosine 88 and serine 93 each contribute to the L-citrulline site. Glycine 118 contributes to the ATP binding site. L-aspartate is bound by residues threonine 120, asparagine 124, and aspartate 125. Asparagine 124 contributes to the L-citrulline binding site. L-citrulline-binding residues include arginine 128, serine 178, serine 187, glutamate 263, and tyrosine 275.

The protein belongs to the argininosuccinate synthase family. Type 1 subfamily. Homotetramer.

The protein resides in the cytoplasm. The catalysed reaction is L-citrulline + L-aspartate + ATP = 2-(N(omega)-L-arginino)succinate + AMP + diphosphate + H(+). It functions in the pathway amino-acid biosynthesis; L-arginine biosynthesis; L-arginine from L-ornithine and carbamoyl phosphate: step 2/3. In Hahella chejuensis (strain KCTC 2396), this protein is Argininosuccinate synthase.